A 199-amino-acid chain; its full sequence is Thymidine kinase (199 aa).

ATP contacts are provided by residues 9–16 (GAMSSGKT) and 93–96 (DEAQ). Residue Glu-94 is the Proton acceptor of the active site. Zn(2+) is bound by residues Cys-151, Cys-154, Cys-188, and His-191.

It belongs to the thymidine kinase family. As to quaternary structure, homotetramer.

The protein resides in the cytoplasm. It carries out the reaction thymidine + ATP = dTMP + ADP + H(+). This is Thymidine kinase from Lactobacillus acidophilus (strain ATCC 700396 / NCK56 / N2 / NCFM).